A 211-amino-acid polypeptide reads, in one-letter code: MANCVVRDWQGKETGKASLDLKVAKETTALDLMHRAVLRQQAHTRQGTASTLTRSEVRGGGRKPYKQKGTGRARQGSIRTPLRPGGGIVFGPKPRSYNLAMNRKERRLALRTALMARIDDVTVVKDFGTSLEAPKTREIVDALGRLGIEADSKVLIVLGTPSEVLRRSVRNLEKVKLIAANQLNVFDLLHANALVLGEEALATIQEVYGDD.

Residues 40 to 87 (QQAHTRQGTASTLTRSEVRGGGRKPYKQKGTGRARQGSIRTPLRPGGG) form a disordered region. The segment covering 41–54 (QAHTRQGTASTLTR) has biased composition (polar residues). A compositionally biased stretch (basic residues) spans 60–71 (GGRKPYKQKGTG).

It belongs to the universal ribosomal protein uL4 family. As to quaternary structure, part of the 50S ribosomal subunit.

Functionally, one of the primary rRNA binding proteins, this protein initially binds near the 5'-end of the 23S rRNA. It is important during the early stages of 50S assembly. It makes multiple contacts with different domains of the 23S rRNA in the assembled 50S subunit and ribosome. Forms part of the polypeptide exit tunnel. This chain is Large ribosomal subunit protein uL4, found in Synechococcus sp. (strain WH7803).